Consider the following 209-residue polypeptide: 7-carboxy-7-deazaguanine synthase (209 aa).

Residues 10–12 (IQG) and R25 each bind substrate. A Radical SAM core domain is found at 16 to 205 (YAGLPMLFVR…PQIHKIIYGD (190 aa)). 3 residues coordinate [4Fe-4S] cluster: C29, C33, and C36. A Mg(2+)-binding site is contributed by T38. T68 contributes to the substrate binding site. Residue G70 participates in S-adenosyl-L-methionine binding.

It belongs to the radical SAM superfamily. 7-carboxy-7-deazaguanine synthase family. Homodimer. [4Fe-4S] cluster is required as a cofactor. The cofactor is S-adenosyl-L-methionine. Requires Mg(2+) as cofactor.

It catalyses the reaction 6-carboxy-5,6,7,8-tetrahydropterin + H(+) = 7-carboxy-7-deazaguanine + NH4(+). It functions in the pathway purine metabolism; 7-cyano-7-deazaguanine biosynthesis. Its function is as follows. Catalyzes the complex heterocyclic radical-mediated conversion of 6-carboxy-5,6,7,8-tetrahydropterin (CPH4) to 7-carboxy-7-deazaguanine (CDG), a step common to the biosynthetic pathways of all 7-deazapurine-containing compounds. The sequence is that of 7-carboxy-7-deazaguanine synthase from Thermoplasma acidophilum (strain ATCC 25905 / DSM 1728 / JCM 9062 / NBRC 15155 / AMRC-C165).